A 170-amino-acid chain; its full sequence is Large ribosomal subunit protein uL10 (170 aa).

Belongs to the universal ribosomal protein uL10 family. Part of the ribosomal stalk of the 50S ribosomal subunit. The N-terminus interacts with L11 and the large rRNA to form the base of the stalk. The C-terminus forms an elongated spine to which L12 dimers bind in a sequential fashion forming a multimeric L10(L12)X complex.

In terms of biological role, forms part of the ribosomal stalk, playing a central role in the interaction of the ribosome with GTP-bound translation factors. The polypeptide is Large ribosomal subunit protein uL10 (rplJ) (Chlamydia pneumoniae (Chlamydophila pneumoniae)).